The following is a 347-amino-acid chain: UDP-N-acetylenolpyruvoylglucosamine reductase (347 aa).

The FAD-binding PCMH-type domain maps to 24–195 (FDARARVAAR…VAVTFRLPKA (172 aa)). R171 is an active-site residue. S247 functions as the Proton donor in the catalytic mechanism. E343 is a catalytic residue.

It belongs to the MurB family. The cofactor is FAD.

Its subcellular location is the cytoplasm. It catalyses the reaction UDP-N-acetyl-alpha-D-muramate + NADP(+) = UDP-N-acetyl-3-O-(1-carboxyvinyl)-alpha-D-glucosamine + NADPH + H(+). It functions in the pathway cell wall biogenesis; peptidoglycan biosynthesis. Functionally, cell wall formation. In Burkholderia mallei (strain NCTC 10247), this protein is UDP-N-acetylenolpyruvoylglucosamine reductase.